The following is an 89-amino-acid chain: Small ribosomal subunit protein uS15 (89 aa).

Belongs to the universal ribosomal protein uS15 family. As to quaternary structure, part of the 30S ribosomal subunit. Forms a bridge to the 50S subunit in the 70S ribosome, contacting the 23S rRNA.

Functionally, one of the primary rRNA binding proteins, it binds directly to 16S rRNA where it helps nucleate assembly of the platform of the 30S subunit by binding and bridging several RNA helices of the 16S rRNA. In terms of biological role, forms an intersubunit bridge (bridge B4) with the 23S rRNA of the 50S subunit in the ribosome. This Parabacteroides distasonis (strain ATCC 8503 / DSM 20701 / CIP 104284 / JCM 5825 / NCTC 11152) protein is Small ribosomal subunit protein uS15.